Reading from the N-terminus, the 669-residue chain is Polyamine deacetylase HDAC10 (669 aa).

The segment at 1 to 323 is histone deacetylase; it reads MGTALVYHED…VCMTVQTLLG (323 aa). Aspartate 20 is a substrate binding site. A Substrate specificity motif is present at residues 21 to 24; that stretch reads PECE. The active-site Proton donor/acceptor is the histidine 135. Residues aspartate 172, histidine 174, and aspartate 265 each contribute to the Zn(2+) site. Substrate is bound at residue tyrosine 305. Residues 361 to 373 are compositionally biased toward polar residues; it reads DVTAVPMSPSSHS. A disordered region spans residues 361-387; the sequence is DVTAVPMSPSSHSPEGRPPPLLPGGPV. At serine 393 the chain carries Phosphoserine.

It belongs to the histone deacetylase family. HD type 2 subfamily. In terms of assembly, interacts with HDAC3. Interacts with HDAC2 and NCOR2/SMRT. Interacts with HSPA8/HSC70. Interacts with MSH2. As to expression, widely expressed with high levels in liver and kidney.

The protein resides in the cytoplasm. The protein localises to the nucleus. It catalyses the reaction N(8)-acetylspermidine + H2O = spermidine + acetate. The catalysed reaction is N-acetylputrescine + H2O = putrescine + acetate. It carries out the reaction N-acetylcadaverine + H2O = cadaverine + acetate. The enzyme catalyses N(6)-acetyl-L-lysyl-[protein] + H2O = L-lysyl-[protein] + acetate. In terms of biological role, polyamine deacetylase (PDAC), which acts preferentially on N(8)-acetylspermidine, and also on acetylcadaverine and acetylputrescine. Exhibits attenuated catalytic activity toward N(1),N(8)-diacetylspermidine and very low activity, if any, toward N(1)-acetylspermidine. Histone deacetylase activity has been observed in vitro. Has also been shown to be involved in MSH2 deacetylation. The physiological relevance of protein/histone deacetylase activity is unclear and could be very weak. May play a role in the promotion of late stages of autophagy, possibly autophagosome-lysosome fusion and/or lysosomal exocytosis in neuroblastoma cells. May play a role in homologous recombination. May promote DNA mismatch repair. The polypeptide is Polyamine deacetylase HDAC10 (HDAC10) (Homo sapiens (Human)).